A 420-amino-acid chain; its full sequence is Histidine--tRNA ligase (420 aa).

The protein belongs to the class-II aminoacyl-tRNA synthetase family. In terms of assembly, homodimer.

It localises to the cytoplasm. The enzyme catalyses tRNA(His) + L-histidine + ATP = L-histidyl-tRNA(His) + AMP + diphosphate + H(+). The polypeptide is Histidine--tRNA ligase (hisS) (Mycoplasmopsis pulmonis (strain UAB CTIP) (Mycoplasma pulmonis)).